The chain runs to 605 residues: Pyruvate decarboxylase 1 (605 aa).

Residues aspartate 67 and histidine 154 each contribute to the substrate site. Positions 432 to 514 (DSWFNCQKLR…FLINNGGYTI (83 aa)) are thiamine pyrophosphate binding. Residues aspartate 482, asparagine 509, and glycine 511 each contribute to the Mg(2+) site. Glutamate 515 is a substrate binding site.

This sequence belongs to the TPP enzyme family. Homotetramer. The cofactor is a metal cation. It depends on thiamine diphosphate as a cofactor.

The catalysed reaction is a 2-oxocarboxylate + H(+) = an aldehyde + CO2. This chain is Pyruvate decarboxylase 1 (PDC1), found in Oryza sativa subsp. indica (Rice).